The chain runs to 381 residues: Succinyl-diaminopimelate desuccinylase (381 aa).

A Zn(2+)-binding site is contributed by His71. Asp73 is a catalytic residue. Zn(2+) is bound at residue Asp104. Glu136 serves as the catalytic Proton acceptor. The Zn(2+) site is built by Glu137, Glu166, and His351.

It belongs to the peptidase M20A family. DapE subfamily. In terms of assembly, homodimer. Zn(2+) serves as cofactor. Requires Co(2+) as cofactor.

It catalyses the reaction N-succinyl-(2S,6S)-2,6-diaminopimelate + H2O = (2S,6S)-2,6-diaminopimelate + succinate. It participates in amino-acid biosynthesis; L-lysine biosynthesis via DAP pathway; LL-2,6-diaminopimelate from (S)-tetrahydrodipicolinate (succinylase route): step 3/3. Its function is as follows. Catalyzes the hydrolysis of N-succinyl-L,L-diaminopimelic acid (SDAP), forming succinate and LL-2,6-diaminopimelate (DAP), an intermediate involved in the bacterial biosynthesis of lysine and meso-diaminopimelic acid, an essential component of bacterial cell walls. The protein is Succinyl-diaminopimelate desuccinylase of Ehrlichia chaffeensis (strain ATCC CRL-10679 / Arkansas).